Reading from the N-terminus, the 194-residue chain is Small ribosomal subunit protein uS4c (194 aa).

An S4 RNA-binding domain is found at 82 to 143; sequence MRLDNILFRL…KQRSKALIQD (62 aa).

Belongs to the universal ribosomal protein uS4 family. In terms of assembly, part of the 30S ribosomal subunit. Contacts protein S5. The interaction surface between S4 and S5 is involved in control of translational fidelity.

The protein resides in the plastid. Its subcellular location is the chloroplast. One of the primary rRNA binding proteins, it binds directly to 16S rRNA where it nucleates assembly of the body of the 30S subunit. Functionally, with S5 and S12 plays an important role in translational accuracy. The polypeptide is Small ribosomal subunit protein uS4c (rps4) (Bobartia gladiata (Sword rush-lily)).